Here is a 916-residue protein sequence, read N- to C-terminus: MKTSKIIIASLVSLTLVSNPILTFAATNDVIDSTTEITTDKEISSTQPTIKTTLKAGQTQSFNDWFPDDNFASEVAAAFEMQATDTISEEQLATLTSLDCHNSSIADMTGIEKLTGLTKLICTYNNITTLDLSQNTNLTYLACDSNKLTNLDVTPLTKLTYLNCDTNKLTKIDVSQNPLLTYLNCARNTLTEIDVSHNTQLTELDCHLNKKITKLDVTPQTQLTTLDCSFNKITALDVSQNKLLNRLNCDTNNITKLDLNQNIQLTFLNCSSNKLTEIDVTPLTQLTYFDCSVNPLTELDVSTLSKLTTLHCIQTDLLEIDLTHNTQLIYFQAEGCRKIKELDVTHNTQLYLLDCQAAGITELDLSQNPKLVYLYLNNTELTKLDVSHNTKLKSLSCVNAHIQDFSSVGKIPVLNNNLDAEGQTITMPKETLTNNSLTIAVSPDLLDQFGNPMNIEPGDGGVYDQATNTITWENLSTDNPAVTYTFTSENGAIVGTVTTPFEAPQPIKGEDVTVHYLDDKGEKLAADEVLSGNLDDPYTSSAKDIPDYTLTTTPDNATGTFTTTSQSVTYVYTKNIVAAEPVTVNYVDDTGKTLAPSETLNGNVGDTYNATAKQIDGYTLSTTPNNATGTFNTSSQTVTYVYTKNIVAAEPVTVNYVDDTGKTLAPSETLNGNVGDTYNATAKQIDGYTLSAEPTNATGQFTSSAQTVNYIYTKNPAPEKGVVEIHYVDENNKQLSSATKISGTVGDNYTTEPKNIDGYTLTTTPDNATGTFNTSSQTVTYVYTKNIVAAEPVTVNYVDANGKTLAPSETLNGTIGDTYNATAKQIDGYTLSAEPTNATGQFTNSAQTVNYIYTKNTNIDQPLPDKKTTKPSNLKTTEVKKASDTLPKTGDSTPWKSALLGVFLSSTALVIWKKKK.

The N-terminal stretch at 1-25 (MKTSKIIIASLVSLTLVSNPILTFA) is a signal peptide. LRR repeat units lie at residues 94 to 115 (TLTSLDCHNSSIADMTGIEKLT), 116 to 136 (GLTKLICTYNNITTLDLSQNT), 137 to 157 (NLTYLACDSNKLTNLDVTPLT), 158 to 179 (KLTYLNCDTNKLTKIDVSQNPL), 180 to 200 (LTYLNCARNTLTEIDVSHNTQ), 201 to 221 (LTELDCHLNKKITKLDVTPQT), 222 to 243 (QLTTLDCSFNKITALDVSQNKL), 244 to 263 (LNRLNCDTNNITKLDLNQNI), 264 to 284 (QLTFLNCSSNKLTEIDVTPLT), 285 to 306 (QLTYFDCSVNPLTELDVSTLSK), 316 to 325 (DLLEIDLTHN), 338 to 357 (KIKELDVTHNTQLYLLDCQA), 359 to 368 (GITELDLSQN), and 380 to 402 (ELTKLDVSHNTKLKSLSCVNAHI). 5 MucBP domains span residues 506–568 (PIKG…SQSV), 576–638 (IVAA…SQTV), 646–708 (IVAA…AQTV), 717–779 (APEK…SQTV), and 787–849 (IVAA…AQTV). A disordered region spans residues 862–888 (PLPDKKTTKPSNLKTTEVKKASDTLPK). An LPXTG sorting signal motif is present at residues 886–890 (LPKTG). Thr889 is modified (pentaglycyl murein peptidoglycan amidated threonine). A propeptide spans 890-916 (GDSTPWKSALLGVFLSSTALVIWKKKK) (removed by sortase).

It belongs to the internalin family.

The protein resides in the secreted. Its subcellular location is the cell wall. In terms of biological role, involved in several steps of L.monocytogenes infection, probably improves adhesin to host cells. The chain is Internalin J (inlJ) from Listeria monocytogenes serotype 4b (strain F2365).